Here is a 165-residue protein sequence, read N- to C-terminus: Small ribosomal subunit protein uS13 (165 aa).

Residues 139–165 form a disordered region; that stretch reads GMTIGVARKKAAQPQSQQSSSQQQKSS. Positions 153 to 165 are enriched in low complexity; it reads QSQQSSSQQQKSS.

It belongs to the universal ribosomal protein uS13 family. In terms of assembly, part of the 30S ribosomal subunit. Forms a loose heterodimer with protein S19. Forms two bridges to the 50S subunit in the 70S ribosome.

Located at the top of the head of the 30S subunit, it contacts several helices of the 16S rRNA. In the 70S ribosome it contacts the 23S rRNA (bridge B1a) and protein L5 of the 50S subunit (bridge B1b), connecting the 2 subunits; these bridges are implicated in subunit movement. The protein is Small ribosomal subunit protein uS13 of Saccharolobus solfataricus (strain ATCC 35092 / DSM 1617 / JCM 11322 / P2) (Sulfolobus solfataricus).